A 581-amino-acid chain; its full sequence is Proline--tRNA ligase (581 aa).

This sequence belongs to the class-II aminoacyl-tRNA synthetase family. ProS type 1 subfamily. As to quaternary structure, homodimer.

It localises to the cytoplasm. It carries out the reaction tRNA(Pro) + L-proline + ATP = L-prolyl-tRNA(Pro) + AMP + diphosphate. Its function is as follows. Catalyzes the attachment of proline to tRNA(Pro) in a two-step reaction: proline is first activated by ATP to form Pro-AMP and then transferred to the acceptor end of tRNA(Pro). As ProRS can inadvertently accommodate and process non-cognate amino acids such as alanine and cysteine, to avoid such errors it has two additional distinct editing activities against alanine. One activity is designated as 'pretransfer' editing and involves the tRNA(Pro)-independent hydrolysis of activated Ala-AMP. The other activity is designated 'posttransfer' editing and involves deacylation of mischarged Ala-tRNA(Pro). The misacylated Cys-tRNA(Pro) is not edited by ProRS. The polypeptide is Proline--tRNA ligase (Blochmanniella floridana).